The following is a 752-amino-acid chain: Protein GCN20 (752 aa).

At A2 the chain carries N-acetylalanine. 2 consecutive ABC transporter domains span residues 199-464 (IHID…RKNA) and 532-748 (IQLQ…AAGV). ATP contacts are provided by residues 232-239 (GQNGIGKS) and 565-572 (GANGCGKT).

The protein belongs to the ABC transporter superfamily. ABCF family. EF3 subfamily. In terms of assembly, interacts (via N-terminus) with GCN1 (via C-terminus); this interaction stimulates GCN2 kinase activity in response to amino acid starvation. The GCN1-GCN20 complex interacts with GCN2 on translating ribosomes in amino acid-starved cells; this association stimulates GCN2 kinase activation by uncharged tRNAs, and hence allowing GCN4 translational activation and derepression of amino acid biosynthetic genes. Associates with ribosomes.

In terms of biological role, acts as a positive activator of the GCN2 protein kinase activity in response to in response to low amino acid, carbon, or purine availability. Component of the GCN1-GCN20 complex that forms a complex with GCN2 on translating ribosomes; during this process, GCN20 helps GCN1 to act as a chaperone to facilitate delivery of uncharged tRNAs that enter the A site of ribosomes to the tRNA-binding domain of GCN2, and hence stimulating GCN2 kinase activity. Participates in gene-specific mRNA translation activation, such as the transcriptional activator GCN4, by promoting the GCN2-mediated phosphorylation of eukaryotic translation initiation factor 2 (eIF-2-alpha/SUI2) on 'Ser-52', and hence allowing GCN4-mediated reprogramming of amino acid biosynthetic gene expression to alleviate nutrient depletion. This chain is Protein GCN20, found in Saccharomyces cerevisiae (strain ATCC 204508 / S288c) (Baker's yeast).